The primary structure comprises 258 residues: MVLIRVLANLLILQLSYAQKSSELVIGGDECNINEHRSLVVLFNSSGVLCGGTLINQEYVLTAAHCDMPNMQILLGVHSASVLNDDEQARDPEEKYFCLSSNNDTEWDKDIMLIRLNRSVNNSVHIAPLSLPSSPPRLGSVCRVMGWGAITSPNETYPDVPHCANINILRYSLCRAVYLGMPVQSRILCAGILRGGKDSCKGDSGGPLICNGQLQGIVSAGSDPCAKPRVPNLYIKVFDYTDWIQSIIAGNTTVTCPQ.

A signal peptide spans 1-18 (MVLIRVLANLLILQLSYA). The propeptide occupies 19–24 (QKSSEL). A Peptidase S1 domain is found at 25 to 249 (VIGGDECNIN…YTDWIQSIIA (225 aa)). 6 disulfide bridges follow: Cys-31-Cys-163, Cys-50-Cys-66, Cys-98-Cys-256, Cys-142-Cys-210, Cys-174-Cys-189, and Cys-200-Cys-225. Asn-44 is a glycosylation site (N-linked (GlcNAc...) asparagine). His-65 (charge relay system) is an active-site residue. N-linked (GlcNAc...) asparagine glycosylation is present at Asn-103. Asp-110 acts as the Charge relay system in catalysis. N-linked (GlcNAc...) asparagine glycosylation is found at Asn-117, Asn-121, and Asn-154. Catalysis depends on Ser-204, which acts as the Charge relay system. Asn-251 is a glycosylation site (N-linked (GlcNAc...) asparagine).

This sequence belongs to the peptidase S1 family. Snake venom subfamily. As to quaternary structure, monomer. As to expression, expressed by the venom gland.

It localises to the secreted. In terms of biological role, snake venom serine protease that may act in the hemostasis system of the prey. The protein is Snake venom serine protease 3 (TLG3) of Craspedocephalus gramineus (Bamboo pit viper).